The sequence spans 119 residues: Large ribosomal subunit protein uL18 (119 aa).

The protein belongs to the universal ribosomal protein uL18 family. In terms of assembly, part of the 50S ribosomal subunit; part of the 5S rRNA/L5/L18/L25 subcomplex. Contacts the 5S and 23S rRNAs.

In terms of biological role, this is one of the proteins that bind and probably mediate the attachment of the 5S RNA into the large ribosomal subunit, where it forms part of the central protuberance. The polypeptide is Large ribosomal subunit protein uL18 (Dinoroseobacter shibae (strain DSM 16493 / NCIMB 14021 / DFL 12)).